The following is a 516-amino-acid chain: Gamma-aminobutyrate transaminase 1, mitochondrial (516 aa).

The N-terminal 47 residues, 1 to 47, are a transit peptide targeting the mitochondrion; the sequence is MVIARGLLRSNASSSSSQAINLLKYVTSTGSLQGHTQNLCDASTRHF. Residue 171-172 participates in pyridoxal 5'-phosphate binding; that stretch reads GS. Position 204 (Y204) interacts with substrate. A pyridoxal 5'-phosphate-binding site is contributed by D311. K340 serves as a coordination point for substrate. An N6-(pyridoxal phosphate)lysine modification is found at K340.

The protein belongs to the class-III pyridoxal-phosphate-dependent aminotransferase family. In terms of tissue distribution, expressed in roots, stems and panicles.

It is found in the mitochondrion. The catalysed reaction is 4-aminobutanoate + pyruvate = succinate semialdehyde + L-alanine. The enzyme catalyses 4-aminobutanoate + glyoxylate = succinate semialdehyde + glycine. Transaminase that degrades gamma-amino butyric acid (GABA) and uses pyruvate as amino-group acceptor, but not 2-oxoglutarate. Not involved in the interaction with blast fungus. In Oryza sativa subsp. japonica (Rice), this protein is Gamma-aminobutyrate transaminase 1, mitochondrial (OSL2).